Consider the following 266-residue polypeptide: Undecaprenyl-diphosphatase (266 aa).

8 helical membrane passes run 1–21, 43–63, 81–101, 109–129, 159–179, 183–203, 219–239, and 246–266; these read MVVILAIVEGITEFLPISSTG, FLIIIQLGAIFSVVVYFWKDI, LKIIVGVLPAMVIGLLLDDII, VLIVAITLIAYGVIFIGIEVV, LAMIPGTSRSGATIIGALLLG, PLAAEFSFYLAIPTMFGATAL, YLALGSAIAFVVAYIVIKWFM, and SFASFGLYRIILGIIVIVLLY.

The protein belongs to the UppP family.

The protein resides in the cell inner membrane. The catalysed reaction is di-trans,octa-cis-undecaprenyl diphosphate + H2O = di-trans,octa-cis-undecaprenyl phosphate + phosphate + H(+). Its function is as follows. Catalyzes the dephosphorylation of undecaprenyl diphosphate (UPP). Confers resistance to bacitracin. The sequence is that of Undecaprenyl-diphosphatase from Fusobacterium nucleatum subsp. nucleatum (strain ATCC 25586 / DSM 15643 / BCRC 10681 / CIP 101130 / JCM 8532 / KCTC 2640 / LMG 13131 / VPI 4355).